Here is a 132-residue protein sequence, read N- to C-terminus: S-adenosylmethionine decarboxylase proenzyme (132 aa).

The Schiff-base intermediate with substrate; via pyruvic acid role is filled by Ser-65. Residue Ser-65 is modified to Pyruvic acid (Ser); by autocatalysis. Residue His-70 is the Proton acceptor; for processing activity of the active site. Cys-85 (proton donor; for catalytic activity) is an active-site residue.

The protein belongs to the prokaryotic AdoMetDC family. Type 1 subfamily. Heterotetramer of two alpha and two beta chains arranged as a dimer of alpha/beta heterodimers. Pyruvate serves as cofactor. Post-translationally, is synthesized initially as an inactive proenzyme. Formation of the active enzyme involves a self-maturation process in which the active site pyruvoyl group is generated from an internal serine residue via an autocatalytic post-translational modification. Two non-identical subunits are generated from the proenzyme in this reaction, and the pyruvate is formed at the N-terminus of the alpha chain, which is derived from the carboxyl end of the proenzyme. The post-translation cleavage follows an unusual pathway, termed non-hydrolytic serinolysis, in which the side chain hydroxyl group of the serine supplies its oxygen atom to form the C-terminus of the beta chain, while the remainder of the serine residue undergoes an oxidative deamination to produce ammonia and the pyruvoyl group blocking the N-terminus of the alpha chain.

The catalysed reaction is S-adenosyl-L-methionine + H(+) = S-adenosyl 3-(methylsulfanyl)propylamine + CO2. The protein operates within amine and polyamine biosynthesis; S-adenosylmethioninamine biosynthesis; S-adenosylmethioninamine from S-adenosyl-L-methionine: step 1/1. Functionally, catalyzes the decarboxylation of S-adenosylmethionine to S-adenosylmethioninamine (dcAdoMet), the propylamine donor required for the synthesis of the polyamines spermine and spermidine from the diamine putrescine. In Symbiobacterium thermophilum (strain DSM 24528 / JCM 14929 / IAM 14863 / T), this protein is S-adenosylmethionine decarboxylase proenzyme.